The chain runs to 130 residues: Small ribosomal subunit protein uS11 (130 aa).

A disordered region spans residues 111 to 130 (IRDVTPVPHNGSRPPKRRRA).

Belongs to the universal ribosomal protein uS11 family. Part of the 30S ribosomal subunit. Interacts with proteins S7 and S18. Binds to IF-3.

Located on the platform of the 30S subunit, it bridges several disparate RNA helices of the 16S rRNA. Forms part of the Shine-Dalgarno cleft in the 70S ribosome. The sequence is that of Small ribosomal subunit protein uS11 from Lactobacillus acidophilus (strain ATCC 700396 / NCK56 / N2 / NCFM).